The chain runs to 427 residues: Heterogeneous nuclear ribonucleoprotein K (427 aa).

The interval 1 to 34 is disordered; the sequence is METEQQEETFTNTETNGKRPAEDMEEEQAFKRSR. Positions 16–34 are enriched in basic and acidic residues; the sequence is NGKRPAEDMEEEQAFKRSR. KH domains follow at residues 39–101 and 117–182; these read MVEL…LKKI and DCEL…IKII. 2 consecutive repeat copies span residues 51 to 73 and 56 to 59. The 2 X 22 AA approximate repeats stretch occupies residues 51-385; the sequence is AGAVIGKGGK…QIRHESGASI (335 aa). The tract at residues 56-371 is 5 X 4 AA repeats of G-X-G-G; the sequence is GKGGKNIKAL…LAGSIIGKGG (316 aa). Residues 209-246 form an RNA-binding RGG-box region; sequence YGGFTMMFDDRRGRPVGFPMRGRGGFDRMPPNRGGRPM. 3 tandem repeats follow at residues 218-223, 230-233, and 240-243. The segment at 218–302 is 2 X 6 AA approximate repeats; sequence DRRGRPVGFP…LMSYDRRGRP (85 aa). Positions 221–305 are disordered; sequence GRPVGFPMRG…YDRRGRPGDR (85 aa). The span at 249-258 shows a compositional bias: basic and acidic residues; sequence SRRDYDDMSP. Repeat copies occupy residues 268–271, 297–302, 363–385, and 368–371. The span at 295 to 305 shows a compositional bias: basic and acidic residues; the sequence is SYDRRGRPGDR. In terms of domain architecture, KH 3 spans 351–415; sequence IITTQVTIPK…DQIQNAQYLL (65 aa).

Its subcellular location is the cytoplasm. It is found in the nucleus. The protein resides in the nucleoplasm. In terms of biological role, one of the major pre-mRNA-binding proteins. Binds tenaciously to poly(C) sequences. Likely to play a role in the nuclear metabolism of hnRNAs, particularly for pre-mRNAs that contain cytidine-rich sequences. Can also bind poly(C) single-stranded DNA. May play an important role in p53/TP53 response to DNA damage, acting at the level of both transcription activation and repression. As part of a ribonucleoprotein complex, may negatively regulate the transcription of genes involved in neuronal differentiation. The chain is Heterogeneous nuclear ribonucleoprotein K (HNRNPK) from Gallus gallus (Chicken).